The primary structure comprises 426 residues: UDP-N-acetylglucosamine 1-carboxyvinyltransferase (426 aa).

A phosphoenolpyruvate-binding site is contributed by 22-23 (KN). Arg93 serves as a coordination point for UDP-N-acetyl-alpha-D-glucosamine. Residue Cys117 is the Proton donor of the active site. Cys117 bears the 2-(S-cysteinyl)pyruvic acid O-phosphothioketal mark. UDP-N-acetyl-alpha-D-glucosamine-binding positions include 162–165 (KVSV), Asp307, and Ile329.

The protein belongs to the EPSP synthase family. MurA subfamily.

It is found in the cytoplasm. The enzyme catalyses phosphoenolpyruvate + UDP-N-acetyl-alpha-D-glucosamine = UDP-N-acetyl-3-O-(1-carboxyvinyl)-alpha-D-glucosamine + phosphate. It functions in the pathway cell wall biogenesis; peptidoglycan biosynthesis. Functionally, cell wall formation. Adds enolpyruvyl to UDP-N-acetylglucosamine. This Haemophilus ducreyi (strain 35000HP / ATCC 700724) protein is UDP-N-acetylglucosamine 1-carboxyvinyltransferase.